The following is a 341-amino-acid chain: Phosphoribosylformylglycinamidine cyclo-ligase (341 aa).

It belongs to the AIR synthase family.

The protein localises to the cytoplasm. It catalyses the reaction 2-formamido-N(1)-(5-O-phospho-beta-D-ribosyl)acetamidine + ATP = 5-amino-1-(5-phospho-beta-D-ribosyl)imidazole + ADP + phosphate + H(+). Its pathway is purine metabolism; IMP biosynthesis via de novo pathway; 5-amino-1-(5-phospho-D-ribosyl)imidazole from N(2)-formyl-N(1)-(5-phospho-D-ribosyl)glycinamide: step 2/2. This is Phosphoribosylformylglycinamidine cyclo-ligase from Finegoldia magna (strain ATCC 29328 / DSM 20472 / WAL 2508) (Peptostreptococcus magnus).